The sequence spans 397 residues: Serpin B10 (397 aa).

Positions 74–77 (KKRK) match the Nuclear localization signal motif.

Belongs to the serpin family. Ov-serpin subfamily.

It is found in the nucleus. Its subcellular location is the cytoplasm. Functionally, protease inhibitor that may play a role in the regulation of protease activities during hematopoiesis and apoptosis induced by TNF. May regulate protease activities in the cytoplasm and in the nucleus. This Bos taurus (Bovine) protein is Serpin B10 (SERPINB10).